A 291-amino-acid polypeptide reads, in one-letter code: Phosphoribosylaminoimidazole-succinocarboxamide synthase (291 aa).

It belongs to the SAICAR synthetase family.

It catalyses the reaction 5-amino-1-(5-phospho-D-ribosyl)imidazole-4-carboxylate + L-aspartate + ATP = (2S)-2-[5-amino-1-(5-phospho-beta-D-ribosyl)imidazole-4-carboxamido]succinate + ADP + phosphate + 2 H(+). Its pathway is purine metabolism; IMP biosynthesis via de novo pathway; 5-amino-1-(5-phospho-D-ribosyl)imidazole-4-carboxamide from 5-amino-1-(5-phospho-D-ribosyl)imidazole-4-carboxylate: step 1/2. In Candida albicans (Yeast), this protein is Phosphoribosylaminoimidazole-succinocarboxamide synthase (ADE1).